The following is a 1214-amino-acid chain: Spliceosome-associated protein 130 A (1214 aa).

The disordered stretch occupies residues Ala817–Gln848. Over residues Gly834–Ser845 the composition is skewed to acidic residues.

It belongs to the RSE1 family. As to quaternary structure, identified in the spliceosome C complex. Component of the U11/U12 snRNPs that are part of the U12-type spliceosome. Component of splicing factor SF3B complex. Expressed at low levels in roots, leaves, inflorescence and, to a lower extent, in siliques.

It localises to the nucleus. In terms of biological role, subunit of the splicing factor SF3B required for 'A' complex assembly formed by the stable binding of U2 snRNP to the branchpoint sequence (BPS) in pre-mRNA. Sequence independent binding of SF3A/SF3B complex upstream of the branch site is essential, it may anchor U2 snRNP to the pre-mRNA. May also be involved in the assembly of the 'E' complex. Also belongs to the minor U12-dependent spliceosome, which is involved in the splicing of rare class of nuclear pre-mRNA intron. Required for pollen and ovule development, especially during the transition from microspore to the bicellular stage in pollen development. Involved in the accumulation of QRT1 and QRT3. This Arabidopsis thaliana (Mouse-ear cress) protein is Spliceosome-associated protein 130 A.